Here is a 72-residue protein sequence, read N- to C-terminus: Small ribosomal subunit protein bS18c (72 aa).

Belongs to the bacterial ribosomal protein bS18 family. In terms of assembly, part of the 30S ribosomal subunit.

It is found in the plastid. The protein localises to the chloroplast. The chain is Small ribosomal subunit protein bS18c from Phaeodactylum tricornutum (strain CCAP 1055/1).